We begin with the raw amino-acid sequence, 868 residues long: DNA topoisomerase 1 (868 aa).

The Toprim domain occupies 3-147 (KSLVIVESPA…RYKRVVFNEI (145 aa)). Residue Glu-9 coordinates Mg(2+). Positions 34 to 70 (IRDLPTSGSSSSKEPAAKGRKSASEAPALSPKEKARR) are disordered. Asp-116 provides a ligand contact to Mg(2+). In terms of domain architecture, Topo IA-type catalytic spans 163 to 580 (DINRVNAQQA…EFYGDFKKKL (418 aa)). The segment at 197–202 (SAGRVQ) is interaction with DNA. Tyr-324 functions as the O-(5'-phospho-DNA)-tyrosine intermediate in the catalytic mechanism. C4-type zinc fingers lie at residues 602–633 (CREC…KERC), 664–691 (CPIC…NPDC), and 713–738 (CDKC…NPTC).

The protein belongs to the type IA topoisomerase family. Monomer. Mg(2+) serves as cofactor.

It catalyses the reaction ATP-independent breakage of single-stranded DNA, followed by passage and rejoining.. Functionally, releases the supercoiling and torsional tension of DNA, which is introduced during the DNA replication and transcription, by transiently cleaving and rejoining one strand of the DNA duplex. Introduces a single-strand break via transesterification at a target site in duplex DNA. The scissile phosphodiester is attacked by the catalytic tyrosine of the enzyme, resulting in the formation of a DNA-(5'-phosphotyrosyl)-enzyme intermediate and the expulsion of a 3'-OH DNA strand. The free DNA strand then undergoes passage around the unbroken strand, thus removing DNA supercoils. Finally, in the religation step, the DNA 3'-OH attacks the covalent intermediate to expel the active-site tyrosine and restore the DNA phosphodiester backbone. The polypeptide is DNA topoisomerase 1 (Pseudomonas aeruginosa (strain ATCC 15692 / DSM 22644 / CIP 104116 / JCM 14847 / LMG 12228 / 1C / PRS 101 / PAO1)).